The chain runs to 456 residues: Aromatic amino acid transport protein AroP (456 aa).

Residues 1 to 18 (MEGQQHGEQLKRGLKNRH) lie on the Cytoplasmic side of the membrane. Residues 19–39 (IQLIALGGAIGTGLFLGSASV) traverse the membrane as a helical segment. Residues 40–41 (IQ) are Periplasmic-facing. The helical transmembrane segment at 42 to 62 (SAGPGIILGYAIAGFIAFLIM) threads the bilayer. The Cytoplasmic portion of the chain corresponds to 63–85 (RQLGEMVVEEPVAGSFSHFAYKY). A helical transmembrane segment spans residues 86–106 (WGSFAGFASGWNYWVLYVLVA). Residues 107-116 (MAELTAVGKY) are Periplasmic-facing. Residues 117-137 (IQFWYPEIPTWVSAAVFFVVI) form a helical membrane-spanning segment. Residues 138–154 (NAINLTNVKVFGEMEFW) are Cytoplasmic-facing. A helical transmembrane segment spans residues 155 to 175 (FAIIKVIAVVAMIIFGAWLLF). Over 176 to 200 (SGNGGPQASVSNLWDQGGFLPHGFT) the chain is Periplasmic. Residues 201-221 (GLVMMMAIIMFSFGGLELVGI) form a helical membrane-spanning segment. Residues 222-239 (TAAEADNPEQSIPKATNQ) are Cytoplasmic-facing. A helical transmembrane segment spans residues 240–260 (VIYRILIFYIGSLAVLLSLMP). At 261-270 (WTRVTADTSP) the chain is on the periplasmic side. The helical transmembrane segment at 271 to 291 (FVLIFHELGDTFVANALNIVV) threads the bilayer. Over 292–332 (LTAALSVYNSCVYCNSRMLFGLAQQGNAPKALASVDKRGVP) the chain is Cytoplasmic. A helical membrane pass occupies residues 333 to 353 (VNTILVSALVTALCVLINYLA). At 354 to 357 (PESA) the chain is on the periplasmic side. A helical membrane pass occupies residues 358–378 (FGLLMALVVSALVINWAMISL). Over 379 to 398 (AHMKFRRAKQEQGVVTRFPA) the chain is Cytoplasmic. Residues 399–419 (LLYPLGNWICLLFMAAVLVIM) traverse the membrane as a helical segment. The Periplasmic segment spans residues 420–424 (LMTPG). Residues 425–445 (MAISVYLIPVWLIVLGIGYLF) traverse the membrane as a helical segment. Topologically, residues 446–456 (KEKTAKAVKAH) are cytoplasmic.

The protein belongs to the amino acid-polyamine-organocation (APC) superfamily. Amino acid transporter (AAT) (TC 2.A.3.1) family.

It localises to the cell inner membrane. It carries out the reaction L-phenylalanine(in) + H(+)(in) = L-phenylalanine(out) + H(+)(out). It catalyses the reaction L-tryptophan(in) + H(+)(in) = L-tryptophan(out) + H(+)(out). The catalysed reaction is L-tyrosine(in) + H(+)(in) = L-tyrosine(out) + H(+)(out). Permease that is involved in the active transport across the cytoplasmic membrane of all three aromatic amino acids, phenylalanine, tyrosine and tryptophan. This is Aromatic amino acid transport protein AroP (aroP) from Escherichia coli O6:H1 (strain CFT073 / ATCC 700928 / UPEC).